Reading from the N-terminus, the 477-residue chain is Cytochrome P450 monooxygenase poxC (477 aa).

Residues 24 to 41 (AWHFAVLSFVYVIARSIY) form a helical membrane-spanning segment. Cysteine 420 contacts heme.

The protein belongs to the cytochrome P450 family. Requires heme as cofactor.

The protein localises to the membrane. It functions in the pathway secondary metabolite biosynthesis. Functionally, cytochrome P450 monooxygenase; part of the gene cluster that mediates the biosynthesis of oxaleimides, cytotoxic compounds containing an unusual disubstituted succinimide moiety. The first step of the pathway is provided by the HR-PKS poxF that serves in a new mode of collaborative biosynthesis with the PKS-NRPS poxE, by providing the olefin containing amino acid substrate via the synthesis of an ACP-bound dec-4-enoate. The cytochrome P450 monooxygenase poxM-catalyzed oxidation at the alpha-position creates the enzyme-bound 2-hydroxydec-4-enoyl-ACP thioester, which may be prone to spontaneous hydrolysis to yield 2-hydroxydec-4-enoic acid due to increased electrophilicity of the carbonyl. 2-hydroxydec-4-enoic acid can then be further oxidized by poxM to yield the alpha-ketoacid 2-oxodec-4-enoicacid, which is reductively aminated by the aminotransferase poxL to yield (S,E)-2-aminodec-4-enoic acid. The Hybrid PKS-NRPS synthetase poxE then performs condensation between the octaketide product of its PKS modules and the amino group of (S,E)-2-aminodec-4-enoic acid which is activated and incorporated by the adenylation domain. The resulting aminoacyl product can be cyclized by the Diels-Alderase PoxQ and reductively released by the reductive (R) domain of poxE to yield an aldehyde intermediate. The released aldehyde is then substrate for a Knoevenagel condensation by the hydrolyase poxO followed by an oxidation at the 5-position of the pyrrolidone ring. The presence of the olefin from the amino acid building block allows for migration of the substituted allyl group to occur. This allylic transposition reaction takes place in a conjugate addition, semipinacol-like fashion to yield a succinimide intermediate. Iterative two-electron oxidations of the C7 methyl of the succinimide intermediate to the carboxylic acid can be catalyzed by one of two remaining cytochrome P450 monooxygenasess poxC or poxD to yield oxaleimide A. Subsequent oxidation yields the maleimide scaffold oxaleimide I. Both oxaleimide A and oxaleimide I can undergo oxidative modifications in the decalin ring to yield the series of products oxaleimides B to H. The polypeptide is Cytochrome P450 monooxygenase poxC (Penicillium oxalicum (strain 114-2 / CGMCC 5302) (Penicillium decumbens)).